The chain runs to 490 residues: MSRMAEQQLYIHGGYTSATSGRTFETINPANGNVLATVQAAGREDVDRAVKSAQQGQKIWAAMTAMERSRILRRAVDILRERNDELAKLETLDTGKAYSETSTVDIVTGADVLEYYAGLIPALEGSQIPLRETSFVYTRREPLGVVAGIGAWNYPIQIALWKSAPALAAGNAMIFKPSEVTPLTALKLAEIYSEAGLPDGVFNVLPGVGAETGQYLTEHPGIAKVSFTGGVASGKKVMANSAASSLKEVTMELGGKSPLIVFDDADLDLAADIAMMANFFSSGQVCTNGTRVFVPAKCKAAFEQKILARVERIRAGDVFDPQTNFGPLVSFPHRDNVLRYIAKGKEEGARVLCGGDVLKGDGFDNGAWVAPTVFTDCSDDMTIVREEIFGPVMSLLTYESEDEVIRRANDTDYGLAAGIVTADLNRAHRVIHQLEAGICWINTWGESPAEMPVGGYKHSGIGRENGVMTLQSYTQVKSIQVEMAKFQSIF.

The K(+) site is built by Thr26, Ile27, and Asp93. 150-152 (GAW) contacts NAD(+). Lys162 (charge relay system) is an active-site residue. 176–179 (KPSE) serves as a coordination point for NAD(+). Val180 contacts K(+). 230–233 (GVAS) is a binding site for NAD(+). Leu246 is a K(+) binding site. Glu252 serves as the catalytic Proton acceptor. The NAD(+) site is built by Gly254, Cys286, and Glu387. The active-site Nucleophile is the Cys286. The residue at position 286 (Cys286) is a Cysteine sulfenic acid (-SOH). K(+) contacts are provided by Lys457 and Gly460. Glu464 (charge relay system) is an active-site residue.

It belongs to the aldehyde dehydrogenase family. In terms of assembly, dimer of dimers. K(+) serves as cofactor.

It catalyses the reaction betaine aldehyde + NAD(+) + H2O = glycine betaine + NADH + 2 H(+). The protein operates within amine and polyamine biosynthesis; betaine biosynthesis via choline pathway; betaine from betaine aldehyde: step 1/1. Its function is as follows. Involved in the biosynthesis of the osmoprotectant glycine betaine. Catalyzes the irreversible oxidation of betaine aldehyde to the corresponding acid. This chain is Betaine aldehyde dehydrogenase, found in Escherichia coli (strain 55989 / EAEC).